The chain runs to 209 residues: Large ribosomal subunit protein uL3 (209 aa).

It belongs to the universal ribosomal protein uL3 family. In terms of assembly, part of the 50S ribosomal subunit. Forms a cluster with proteins L14 and L19.

In terms of biological role, one of the primary rRNA binding proteins, it binds directly near the 3'-end of the 23S rRNA, where it nucleates assembly of the 50S subunit. The chain is Large ribosomal subunit protein uL3 from Brevibacillus brevis (strain 47 / JCM 6285 / NBRC 100599).